The chain runs to 1405 residues: DNA-directed RNA polymerase subunit beta' (1405 aa).

4 residues coordinate Zn(2+): cysteine 70, cysteine 72, cysteine 85, and cysteine 88. The Mg(2+) site is built by aspartate 460, aspartate 462, and aspartate 464. Zn(2+) is bound by residues cysteine 814, cysteine 888, cysteine 895, and cysteine 898.

It belongs to the RNA polymerase beta' chain family. As to quaternary structure, the RNAP catalytic core consists of 2 alpha, 1 beta, 1 beta' and 1 omega subunit. When a sigma factor is associated with the core the holoenzyme is formed, which can initiate transcription. Mg(2+) serves as cofactor. It depends on Zn(2+) as a cofactor.

It catalyses the reaction RNA(n) + a ribonucleoside 5'-triphosphate = RNA(n+1) + diphosphate. Its function is as follows. DNA-dependent RNA polymerase catalyzes the transcription of DNA into RNA using the four ribonucleoside triphosphates as substrates. The protein is DNA-directed RNA polymerase subunit beta' of Shewanella sp. (strain ANA-3).